Here is a 285-residue protein sequence, read N- to C-terminus: Pantothenate synthetase (285 aa).

Methionine 30 to histidine 37 serves as a coordination point for ATP. Histidine 37 serves as the catalytic Proton donor. Glutamine 61 contributes to the (R)-pantoate binding site. Position 61 (glutamine 61) interacts with beta-alanine. Glycine 149–aspartate 152 serves as a coordination point for ATP. Glutamine 155 contributes to the (R)-pantoate binding site. Leucine 186 to arginine 189 provides a ligand contact to ATP.

This sequence belongs to the pantothenate synthetase family. In terms of assembly, homodimer.

It localises to the cytoplasm. It carries out the reaction (R)-pantoate + beta-alanine + ATP = (R)-pantothenate + AMP + diphosphate + H(+). It participates in cofactor biosynthesis; (R)-pantothenate biosynthesis; (R)-pantothenate from (R)-pantoate and beta-alanine: step 1/1. In terms of biological role, catalyzes the condensation of pantoate with beta-alanine in an ATP-dependent reaction via a pantoyl-adenylate intermediate. The protein is Pantothenate synthetase of Ectopseudomonas mendocina (strain ymp) (Pseudomonas mendocina).